A 151-amino-acid polypeptide reads, in one-letter code: Hemoglobin-2 (151 aa).

The residue at position 2 (threonine 2) is an N-acetylthreonine. Residues 3–148 (TLTNPQKAAI…ICKTLGDYMK (146 aa)) form the Globin domain. Histidine 97 serves as a coordination point for heme b.

This sequence belongs to the globin family. In terms of assembly, homotetramer.

It localises to the cytoplasm. The protein is Hemoglobin-2 of Phacoides pectinatus (Thick lucine).